Here is a 326-residue protein sequence, read N- to C-terminus: tRNA dimethylallyltransferase (326 aa).

Position 10–17 (10–17 (GPTGTGKT)) interacts with ATP. 12–17 (TGTGKT) lines the substrate pocket. The segment at 35 to 38 (DSMQ) is interaction with substrate tRNA.

Belongs to the IPP transferase family. In terms of assembly, monomer. Mg(2+) serves as cofactor.

It catalyses the reaction adenosine(37) in tRNA + dimethylallyl diphosphate = N(6)-dimethylallyladenosine(37) in tRNA + diphosphate. Functionally, catalyzes the transfer of a dimethylallyl group onto the adenine at position 37 in tRNAs that read codons beginning with uridine, leading to the formation of N6-(dimethylallyl)adenosine (i(6)A). This Dictyoglomus turgidum (strain DSM 6724 / Z-1310) protein is tRNA dimethylallyltransferase.